A 1641-amino-acid chain; its full sequence is Histone-lysine N-methyltransferase SETD1 (1641 aa).

A disordered region spans residues 1–23 (MQDVRNINLVNNSSNSHDSSLAN). Positions 8 to 23 (NLVNNSSNSHDSSLAN) are enriched in low complexity. The region spanning 101 to 179 (VEVTIVNLND…KILDVFCDPF (79 aa)) is the RRM domain. Disordered regions lie at residues 236–384 (YTTQ…IDQR), 537–596 (APPF…SDEE), 831–915 (RIRK…SSSS), 930–949 (KART…NLNQ), 1119–1155 (QEKR…RKTA), and 1205–1226 (NSKG…SSQA). The segment covering 244–284 (IPNRSRDRNWNRDKERERDRHFKERSRHSSERSYDRDRGMR) has biased composition (basic and acidic residues). The span at 291–300 (IRRRRTFYRR) shows a compositional bias: basic residues. Basic and acidic residues-rich tracts occupy residues 308–341 (EDSR…ESFR) and 349–384 (KGRD…IDQR). Positions 556-568 (EVFSDVNSDSNNS) are enriched in low complexity. Basic and acidic residues-rich tracts occupy residues 569-579 (ENKKRSCEKNN) and 844-867 (NFLE…KEDS). The span at 904-915 (SASSFFSSSSSS) shows a compositional bias: low complexity. Composition is skewed to basic and acidic residues over residues 930 to 939 (KARTSEEDSP) and 1119 to 1128 (QEKRIEKSLD). Residues 1091–1132 (SEEEKEYQERRKRNTEYMAQMEREFLEEQEKRIEKSLDKNLQ) are a coiled coil. Polar residues-rich tracts occupy residues 1129–1145 (KNLQ…NSPR) and 1205–1217 (NSKG…QSPV). Residues 1473–1478 (RSNQRR) carry the RxxxRR motif motif. Residues 1502–1619 (KQLKFAKSAI…INEEITYDYK (118 aa)) form the SET domain. Tyr-1618 serves as a coordination point for S-adenosyl-L-methionine. A Post-SET domain is found at 1625–1641 (EKIPCLCGAQGCRGTLN).

The protein belongs to the class V-like SAM-binding methyltransferase superfamily. In terms of assembly, component of the Set1C/COMPASS complex, composed at least of the catalytic subunit Set1, wds/WDR5, Wdr82, Rbbp5, ash2, Cfp1/CXXC1, hcf and Dpy-30L1.

Its subcellular location is the nucleus. The protein resides in the chromosome. It catalyses the reaction L-lysyl(4)-[histone H3] + 3 S-adenosyl-L-methionine = N(6),N(6),N(6)-trimethyl-L-lysyl(4)-[histone H3] + 3 S-adenosyl-L-homocysteine + 3 H(+). It carries out the reaction N(6)-methyl-L-lysyl(4)-[histone H3] + S-adenosyl-L-methionine = N(6),N(6)-dimethyl-L-lysyl(4)-[histone H3] + S-adenosyl-L-homocysteine + H(+). The enzyme catalyses N(6),N(6)-dimethyl-L-lysyl(4)-[histone H3] + S-adenosyl-L-methionine = N(6),N(6),N(6)-trimethyl-L-lysyl(4)-[histone H3] + S-adenosyl-L-homocysteine + H(+). Catalytic component of the COMPASS (Set1C) complex that specifically mono-, di- and trimethylates histone H3 to form H3K4me1/2/3. Binds RNAs which might negatively affect its histone methyltransferase activity. COMPASS recognizes ubiquitinated H2B on one face of the nucleosome which stimulates the methylation of H3 on the opposing face. Set1-dependent trimethylation regulates chromatin changes at active promoters that ensure optimal RNA polymerase II release into productive elongation, thereby contributing to optimal transcription. The polypeptide is Histone-lysine N-methyltransferase SETD1 (Drosophila melanogaster (Fruit fly)).